The following is a 37-amino-acid chain: 24 kDa antigen (37 aa).

The sequence is that of 24 kDa antigen from Plasmodium chabaudi.